A 626-amino-acid chain; its full sequence is MPSIARLPDNVANKISAGEVVQRPASVVKELLENAIDSGADRISVVIKDAGRELVRIIDNGRGMSRADALLSVERFATSKLRDVDDLDTLGTLGFRGEALASISSVSHFELRTRMTDAPVALRFRYEGGIAVEESEVQGEAGTSVSVRNLFYNVPARRKFLKSNATEYGHIFELVRSFSLAYPEIQWQLLNDDQELFNFRTSDMLERLDTFYGKGFADSLIEVGEENDYLSIRGYIGRPALQKRKKLDQYFFINRRPIQNRMLTQALQQAYAELLVERQAPFALLFLGIDPSRVDVNVHPAKLEVRFDDERSVRNMFYPVIKRAVTLHDFSPDLAAGGRTSQAGDDSASRGFTHAGGGGFRTLAFQEVPERAITTGELYGSYREGAFGSSRPAVPQPSHQEVMFPVPEVPAAREDISQLLRSSMHEGPEGAGVEPKGEEPKIWQLHNKYLICQIKTGLMIIDQHVAHERVLYERAVEVMESRVPNSQQLLFPQKVEFRPWEYEVFEEIKDDLYRLGFNLRSFGTRAVMIEGVPQDVRPGSEATIMQDMIAEYRENATRLRLERRDNLAKSYSCRNAIMAGQKLSMGEMRTLIDNLFATREPYSCPHGRPVIIKMTLTELDHMFGRS.

It belongs to the DNA mismatch repair MutL/HexB family.

Functionally, this protein is involved in the repair of mismatches in DNA. It is required for dam-dependent methyl-directed DNA mismatch repair. May act as a 'molecular matchmaker', a protein that promotes the formation of a stable complex between two or more DNA-binding proteins in an ATP-dependent manner without itself being part of a final effector complex. In Chlorobium luteolum (strain DSM 273 / BCRC 81028 / 2530) (Pelodictyon luteolum), this protein is DNA mismatch repair protein MutL.